Consider the following 227-residue polypeptide: Leucyl/phenylalanyl-tRNA--protein transferase (227 aa).

This sequence belongs to the L/F-transferase family.

Its subcellular location is the cytoplasm. The catalysed reaction is N-terminal L-lysyl-[protein] + L-leucyl-tRNA(Leu) = N-terminal L-leucyl-L-lysyl-[protein] + tRNA(Leu) + H(+). It catalyses the reaction N-terminal L-arginyl-[protein] + L-leucyl-tRNA(Leu) = N-terminal L-leucyl-L-arginyl-[protein] + tRNA(Leu) + H(+). The enzyme catalyses L-phenylalanyl-tRNA(Phe) + an N-terminal L-alpha-aminoacyl-[protein] = an N-terminal L-phenylalanyl-L-alpha-aminoacyl-[protein] + tRNA(Phe). Its function is as follows. Functions in the N-end rule pathway of protein degradation where it conjugates Leu, Phe and, less efficiently, Met from aminoacyl-tRNAs to the N-termini of proteins containing an N-terminal arginine or lysine. This is Leucyl/phenylalanyl-tRNA--protein transferase from Desulfotalea psychrophila (strain LSv54 / DSM 12343).